The primary structure comprises 249 residues: Small ribosomal subunit protein eS6 (249 aa).

Residue Lys-14 forms a Glycyl lysine isopeptide (Lys-Gly) (interchain with G-Cter in SUMO2) linkage. Glu-35 carries the ADP-ribosyl glutamic acid modification. Position 137 is a (3R)-3-hydroxyarginine (Arg-137). Ser-148 carries the post-translational modification Phosphoserine. Lys-211 bears the N6-acetyllysine mark. Positions 217 to 229 are enriched in basic and acidic residues; sequence MKEAKEKRQEQIA. Residues 217–249 are disordered; that stretch reads MKEAKEKRQEQIAKRRRLSSLRASTSKSESSQK. Residues Ser-235, Ser-236, Ser-240, Ser-242, Ser-244, and Ser-247 each carry the phosphoserine modification. The span at 236–249 shows a compositional bias: low complexity; the sequence is SLRASTSKSESSQK.

This sequence belongs to the eukaryotic ribosomal protein eS6 family. In terms of assembly, component of the small ribosomal subunit. Part of the small subunit (SSU) processome, composed of more than 70 proteins and the RNA chaperone small nucleolar RNA (snoRNA) U3. Post-translationally, ribosomal protein S6 is the major substrate of protein kinases in eukaryote ribosomes. The phosphorylation is stimulated by growth factors, tumor promoting agents, and mitogens. It is dephosphorylated at growth arrest. Phosphorylated at Ser-235 and Ser-236 by RPS6KA1 and RPS6KA3; phosphorylation at these sites facilitates the assembly of the pre-initiation complex. Specifically hydroxylated (with R stereochemistry) at C-3 of Arg-137 by KDM8. In terms of processing, mono-ADP-ribosylation at Glu-35 by PARP16 inhibits polysome assembly and mRNA loading, thereby inhibiting protein translation.

The protein localises to the cytoplasm. It is found in the nucleus. Its subcellular location is the nucleolus. Component of the 40S small ribosomal subunit. Plays an important role in controlling cell growth and proliferation through the selective translation of particular classes of mRNA. Part of the small subunit (SSU) processome, first precursor of the small eukaryotic ribosomal subunit. During the assembly of the SSU processome in the nucleolus, many ribosome biogenesis factors, an RNA chaperone and ribosomal proteins associate with the nascent pre-rRNA and work in concert to generate RNA folding, modifications, rearrangements and cleavage as well as targeted degradation of pre-ribosomal RNA by the RNA exosome. This chain is Small ribosomal subunit protein eS6 (RPS6), found in Oryctolagus cuniculus (Rabbit).